The sequence spans 197 residues: MIPIVVEESGRGERAFDIYSRLLRERIIFLGEPVTSDVANRIVAQLLFLEAEDPEKDIYLYINSPGGSVYDGLGIFDTMNHIRPDVSTVCVGLAASMGAFLLAAGAKGKRTSLAHSRIMIHQPLGGAQGQAKDIEIQANEILYIKQNLNEVLAERTGQPLSRIEDDTDRDFFMSASEAVEYGLIDRVIDRRALKATA.

The Nucleophile role is filled by Ser96. His121 is an active-site residue.

This sequence belongs to the peptidase S14 family. Fourteen ClpP subunits assemble into 2 heptameric rings which stack back to back to give a disk-like structure with a central cavity, resembling the structure of eukaryotic proteasomes.

Its subcellular location is the cytoplasm. The enzyme catalyses Hydrolysis of proteins to small peptides in the presence of ATP and magnesium. alpha-casein is the usual test substrate. In the absence of ATP, only oligopeptides shorter than five residues are hydrolyzed (such as succinyl-Leu-Tyr-|-NHMec, and Leu-Tyr-Leu-|-Tyr-Trp, in which cleavage of the -Tyr-|-Leu- and -Tyr-|-Trp bonds also occurs).. In terms of biological role, cleaves peptides in various proteins in a process that requires ATP hydrolysis. Has a chymotrypsin-like activity. Plays a major role in the degradation of misfolded proteins. The sequence is that of ATP-dependent Clp protease proteolytic subunit 1 from Synechococcus sp. (strain ATCC 27144 / PCC 6301 / SAUG 1402/1) (Anacystis nidulans).